The primary structure comprises 123 residues: Anti-lipopolysaccharide factor (123 aa).

The first 26 residues, 1-26 (MRKGVVAGLCLALVVMCLYLPQPCEA), serve as a signal peptide directing secretion. Asn45 is a glycosylation site (N-linked (GlcNAc...) asparagine). The cysteines at positions 55 and 76 are disulfide-linked.

In terms of tissue distribution, isoform 1 is highly expressed in muscle and stomach, moderately in heart and gill and at lower levels in hemocytes and hepatopancreas. Isoform 2 is mainly expressed in gill, hepatopancreas, muscle and eyestalk.

The protein resides in the secreted. Its function is as follows. May bind to bacterial LPS and thus specifically inhibit the LPS-mediated activation of the hemolymph coagulation. It has a strong antibacterial effect especially on the growth of Gram-negative bacteria. The polypeptide is Anti-lipopolysaccharide factor (Portunus trituberculatus (Swimming crab)).